The sequence spans 198 residues: Ribonuclease HII (198 aa).

One can recognise an RNase H type-2 domain in the interval 10 to 198 (QLVAGVDEVG…PVKRALGLAS (189 aa)). 3 residues coordinate a divalent metal cation: Asp16, Glu17, and Asp108.

This sequence belongs to the RNase HII family. Mn(2+) serves as cofactor. Mg(2+) is required as a cofactor.

It is found in the cytoplasm. It catalyses the reaction Endonucleolytic cleavage to 5'-phosphomonoester.. Its function is as follows. Endonuclease that specifically degrades the RNA of RNA-DNA hybrids. The polypeptide is Ribonuclease HII (Shigella boydii serotype 18 (strain CDC 3083-94 / BS512)).